The sequence spans 148 residues: MDSYSITNVKYLDPTELHRWMQEGHTTTLREPFQVVDVRGSDYMGGHIKDGWHYAYSRLKQDPEYLRELKHRLLEKQADGRGALNVIFHCMLSQQRGPSAAMLLLRSLDTAELSRCRLWVLRGGFSRWQSVYGDDESVTAGYLPDLWR.

Met-1 carries the N-acetylmethionine modification. The Rhodanese domain maps to 29–137 (LREPFQVVDV…WQSVYGDDES (109 aa)).

The protein belongs to the MPI phosphatase family.

It localises to the cytoplasm. It is found in the nucleus. Protein phosphatase. The chain is CDC25-like phosphatase YCH1 (YCH1) from Saccharomyces cerevisiae (strain ATCC 204508 / S288c) (Baker's yeast).